An 82-amino-acid chain; its full sequence is Putative membrane protein insertion efficiency factor (82 aa).

The protein belongs to the UPF0161 family.

The protein resides in the cell membrane. In terms of biological role, could be involved in insertion of integral membrane proteins into the membrane. The chain is Putative membrane protein insertion efficiency factor from Streptococcus uberis (strain ATCC BAA-854 / 0140J).